The sequence spans 1523 residues: Dicer-like protein 1 (1523 aa).

A compositionally biased stretch (polar residues) spans 24–38 (LNLSGERTISTTEPT). A disordered region spans residues 24-58 (LNLSGERTISTTEPTEGNDSSSEESGDNEQISTQR). The 182-residue stretch at 123–304 (LFERAKSQNT…ESATKLEVLL (182 aa)) folds into the Helicase ATP-binding domain. Position 136-143 (136-143 (LDTGSGKT)) interacts with ATP. The DEAH box signature appears at 249-252 (DEAH). The Helicase C-terminal domain maps to 444–617 (LLRQKLIKYF…GIDSEIDSIL (174 aa)). The 91-residue stretch at 640–730 (ALAILARYAS…NSVYHRRLPA (91 aa)) folds into the Dicer dsRNA-binding fold domain. Positions 879–1007 (ELLHLVHENE…VCIEPLRISA (129 aa)) constitute a PAZ domain. RNase III domains follow at residues 1031–1190 (IALE…LSGG) and 1241–1392 (GRKV…VDSD). Residues Glu-1281, Asp-1378, and Glu-1381 each coordinate Mg(2+). One can recognise a DRBM domain in the interval 1426 to 1494 (TFLQNRLTNE…SEKALSVLEN (69 aa)). 4 residues coordinate Zn(2+): Cys-1438, His-1465, Cys-1506, and Cys-1508.

It belongs to the helicase family. Dicer subfamily. Mg(2+) serves as cofactor. It depends on Mn(2+) as a cofactor.

Dicer-like endonuclease involved in cleaving double-stranded RNA in the RNA interference (RNAi) pathway. Produces 21 to 25 bp dsRNAs (siRNAs) which target the selective destruction of homologous RNAs leading to sequence-specific suppression of gene expression, called post-transcriptional gene silencing (PTGS). Part of a broad host defense response against viral infection and transposons. The polypeptide is Dicer-like protein 1 (dcl1) (Aspergillus oryzae (strain ATCC 42149 / RIB 40) (Yellow koji mold)).